A 914-amino-acid chain; its full sequence is MPPPTAQFMGPTQAGQNESQNQSSGEAGEQNQEHGQGPTPILNQSQPASSQPQHQQQRNESISYYTNFNQPRYSTDASINSFLNISDNVPVTSTGGPSSGGAYSNLPRLSTSSTHQPPDLSQIGRGFSIVNNLFPQQQQLQNQHRQQQQQQQQQSHQQPPFKTPSFSTGLTGSSSQYQFLPRNDNTSQPPSKRNSVYLGPNDGPDFEFFSMQQSQQPQFQPSSRRESNSMRPPLLIPAATTKSQSNGTNNSGNMNTNADYESFFNTGTNNSNSNQNPYFLSSRNNSLKFNPEDFDFQFKRRNSFVRGTLDHSSQNAFIPESRLNSLSVNNKANGDPVADNVTNNMKGKSNEVDNDDGNDSSNNNNNNNNNNNNENNNDNNNDNNDNSINSATSTNIPNQEDHSLASTDTTSNSRKDLKEIEQRLRKHLNDEDNYSSAISRPLDKNDVIEGSEGLNKHIDESGMQPNIIKKRKKDDSTVYVKNEMPRTDPPMSKDNSTSAEGAAMANFSGKEPPIPDISSVSDDATNLIGATKVDQLMLIIQARKKGFTEKVNTTQDGDLLFNQTMDILPPKSELVGGVEKPKGTQNTRAVKKHECPYCHRLFSQATHLEVHVRSHIGYKPFVCDYCGKRFTQGGNLRTHERLHTGEKPYSCDICDKKFSRKGNLAAHLVTHQKLKPFVCKLENCNKTFTQLGNMKAHQNRFHKETLNALTAKLAEMNPSENIPLEERQLLEYFASIYKNSNRGIKGRGKGVGTKKSTISSPENHPASTILNPNTNANNAIANDSENNGNPEGNIDSSSNSNPGSHSMISPTQKDMGTLQSQFIQNNFNNSVNSSNPSNQPIINYNYTTLPHSRLGSSSSSNTNNNNSNFSVGAAPGVLMAPTTNNDFSFNLDQSNDNERSQQEQVRFKNINYKS.

3 disordered regions span residues 1 to 63 (MPPP…ESIS), 93 to 124 (STGGPSSGGAYSNLPRLSTSSTHQPPDLSQIG), and 138 to 275 (QQLQ…NSNQ). Residues 13–34 (QAGQNESQNQSSGEAGEQNQEH) are compositionally biased toward polar residues. The span at 44 to 56 (QSQPASSQPQHQQ) shows a compositional bias: low complexity. The residue at position 61 (S61) is a Phosphoserine. Positions 107-116 (PRLSTSSTHQ) are enriched in polar residues. The polyglutamine domain stretch occupies residues 136 to 158 (QQQQLQNQHRQQQQQQQQQSHQQ). Over residues 138-158 (QQLQNQHRQQQQQQQQQSHQQ) the composition is skewed to low complexity. A compositionally biased stretch (polar residues) spans 164-194 (PSFSTGLTGSSSQYQFLPRNDNTSQPPSKRN). 2 stretches are compositionally biased toward low complexity: residues 206 to 222 (FEFFSMQQSQQPQFQPS) and 245 to 275 (SNGTNNSGNMNTNADYESFFNTGTNNSNSNQ). A phosphoserine mark is found at S286 and S325. The disordered stretch occupies residues 326–415 (LSVNNKANGD…STDTTSNSRK (90 aa)). Over residues 359–390 (DSSNNNNNNNNNNNNENNNDNNNDNNDNSINS) the composition is skewed to low complexity. Positions 362 to 386 (NNNNNNNNNNNNENNNDNNNDNNDN) are polyasparagine domain. Residues 391 to 412 (ATSTNIPNQEDHSLASTDTTSN) show a composition bias toward polar residues. 4 consecutive C2H2-type zinc fingers follow at residues 593–615 (HECPYCHRLFSQATHLEVHVRSH), 621–643 (FVCDYCGKRFTQGGNLRTHERLH), 649–671 (YSCDICDKKFSRKGNLAAHLVTH), and 677–702 (FVCKLENCNKTFTQLGNMKAHQNRFH). 2 disordered regions span residues 743–812 (GIKG…SPTQ) and 853–877 (RLGSSSSSNTNNNNSNFSVGAAPGV). Polar residues predominate over residues 754–770 (KKSTISSPENHPASTIL). Low complexity-rich tracts occupy residues 771–782 (NPNTNANNAIAN), 796–809 (SSSNSNPGSHSMIS), and 856–868 (SSSSSNTNNNNSN).

It localises to the nucleus. It is found in the cytoplasm. The protein resides in the cytosol. In terms of biological role, transcription factor involved in the diauxic shift. In the presence of glucose, activates carbon and energy metabolism genes, and in te presence of glycerol-lactate, activates genes needed for cell wall maintenance. Binds to DNA elements with the sequence AAAAGAAA (A4GA3), a motif enriched in the promoters of AZF1-sensitive genes. Required for glucose induction of CLN3 transcription. Also required for proper FLO11 expression. May also function as a corepressor. As an intrinsically disordered protein, AZF1 is capable of forming the prion [AZF1+] that confers resistance to the drug radicicol in a gain-of-function manner but decreases the expression of AZF1's target genes. In Saccharomyces cerevisiae (strain ATCC 204508 / S288c) (Baker's yeast), this protein is Transcription factor AZF1.